We begin with the raw amino-acid sequence, 64 residues long: Large ribosomal subunit protein bL35 (64 aa).

Residues 19 to 41 (SGKVKRERMNGSHNLEHKNRKRT) form a disordered region. A compositionally biased stretch (basic and acidic residues) spans 25 to 35 (ERMNGSHNLEH).

Belongs to the bacterial ribosomal protein bL35 family.

The polypeptide is Large ribosomal subunit protein bL35 (Chlorobaculum tepidum (strain ATCC 49652 / DSM 12025 / NBRC 103806 / TLS) (Chlorobium tepidum)).